Reading from the N-terminus, the 155-residue chain is Protein PtsT (155 aa).

The protein is Protein PtsT (ptsT) of Geobacillus stearothermophilus (Bacillus stearothermophilus).